A 400-amino-acid polypeptide reads, in one-letter code: Homoserine O-acetyltransferase (400 aa).

An AB hydrolase-1 domain is found at 64–374; that stretch reads NAILVCHALT…DKGHDAFLLD (311 aa). Catalysis depends on S169, which acts as the Nucleophile. R239 is a substrate binding site. Active-site residues include D335 and H368. Position 369 (D369) interacts with substrate.

It belongs to the AB hydrolase superfamily. MetX family. In terms of assembly, homodimer.

The protein localises to the cytoplasm. The catalysed reaction is L-homoserine + acetyl-CoA = O-acetyl-L-homoserine + CoA. Its pathway is amino-acid biosynthesis; L-methionine biosynthesis via de novo pathway; O-acetyl-L-homoserine from L-homoserine: step 1/1. In terms of biological role, transfers an acetyl group from acetyl-CoA to L-homoserine, forming acetyl-L-homoserine. This Rhodopseudomonas palustris (strain ATCC BAA-98 / CGA009) protein is Homoserine O-acetyltransferase.